Here is a 395-residue protein sequence, read N- to C-terminus: Elongation factor Tu (395 aa).

The 196-residue stretch at 10–205 (KPHVNIGTIG…VDSYIPLPPR (196 aa)) folds into the tr-type G domain. The tract at residues 19-26 (GHVDHGKT) is G1. GTP is bound at residue 19–26 (GHVDHGKT). Thr26 is a binding site for Mg(2+). Residues 60–64 (GITIN) are G2. The interval 81 to 84 (DCPG) is G3. GTP is bound by residues 81–85 (DCPGH) and 136–139 (NKVD). Residues 136–139 (NKVD) are G4. Residues 174-176 (SAT) are G5.

Belongs to the TRAFAC class translation factor GTPase superfamily. Classic translation factor GTPase family. EF-Tu/EF-1A subfamily. In terms of assembly, monomer.

It localises to the cytoplasm. The catalysed reaction is GTP + H2O = GDP + phosphate + H(+). In terms of biological role, GTP hydrolase that promotes the GTP-dependent binding of aminoacyl-tRNA to the A-site of ribosomes during protein biosynthesis. In Terrimonas ferruginea (Flavobacterium ferrugineum), this protein is Elongation factor Tu.